We begin with the raw amino-acid sequence, 473 residues long: Ribulose bisphosphate carboxylase large chain 2 (473 aa).

Substrate is bound by residues Asn-116 and Thr-166. Lys-168 functions as the Proton acceptor in the catalytic mechanism. Position 170 (Lys-170) interacts with substrate. Mg(2+) is bound by residues Lys-194, Asp-196, and Glu-197. Lys-194 bears the N6-carboxylysine mark. His-287 (proton acceptor) is an active-site residue. Substrate contacts are provided by Arg-288, His-320, and Ser-372.

It belongs to the RuBisCO large chain family. Type I subfamily. As to quaternary structure, heterohexadecamer of 8 large chains and 8 small chains. Requires Mg(2+) as cofactor.

The enzyme catalyses 2 (2R)-3-phosphoglycerate + 2 H(+) = D-ribulose 1,5-bisphosphate + CO2 + H2O. It catalyses the reaction D-ribulose 1,5-bisphosphate + O2 = 2-phosphoglycolate + (2R)-3-phosphoglycerate + 2 H(+). Functionally, ruBisCO catalyzes two reactions: the carboxylation of D-ribulose 1,5-bisphosphate, the primary event in carbon dioxide fixation, as well as the oxidative fragmentation of the pentose substrate. Both reactions occur simultaneously and in competition at the same active site. In Acidithiobacillus ferrooxidans (Thiobacillus ferrooxidans), this protein is Ribulose bisphosphate carboxylase large chain 2.